We begin with the raw amino-acid sequence, 84 residues long: MSNEKASTKAPKFAYPSKKKYCIFCSEKIDYIDYKNVERLKRFMTEKGKIIPRRISGNCARHQRQLSTAIKRARYMALLPYVVK.

It belongs to the bacterial ribosomal protein bS18 family. As to quaternary structure, part of the 30S ribosomal subunit. Forms a tight heterodimer with protein bS6.

Functionally, binds as a heterodimer with protein bS6 to the central domain of the 16S rRNA, where it helps stabilize the platform of the 30S subunit. The sequence is that of Small ribosomal subunit protein bS18 from Dictyoglomus turgidum (strain DSM 6724 / Z-1310).